The primary structure comprises 247 residues: Caffeoyl-CoA O-methyltransferase 2 (247 aa).

Lys21 contributes to the substrate binding site. S-adenosyl-L-methionine is bound by residues Thr63, Glu85, 87 to 88 (GV), Ser93, Asp111, and Ala140. A substrate-binding site is contributed by Asp163. Asp163 lines the a divalent metal cation pocket. Asp165 serves as a coordination point for S-adenosyl-L-methionine. A divalent metal cation-binding residues include Asp189 and Asn190. Asn194 provides a ligand contact to substrate.

Belongs to the class I-like SAM-binding methyltransferase superfamily. Cation-dependent O-methyltransferase family. CCoAMT subfamily. It depends on a divalent metal cation as a cofactor.

It catalyses the reaction (E)-caffeoyl-CoA + S-adenosyl-L-methionine = (E)-feruloyl-CoA + S-adenosyl-L-homocysteine + H(+). It functions in the pathway aromatic compound metabolism; phenylpropanoid biosynthesis. In terms of biological role, methylates caffeoyl-CoA to feruloyl-CoA and 5-hydroxyferuloyl-CoA to sinapoyl-CoA. Plays a role in the synthesis of feruloylated polysaccharides. Involved in the reinforcement of the plant cell wall. Also involved in the responding to wounding or pathogen challenge by the increased formation of cell wall-bound ferulic acid polymers. The sequence is that of Caffeoyl-CoA O-methyltransferase 2 (CCOAOMT2) from Eucalyptus globulus (Tasmanian blue gum).